The chain runs to 715 residues: DNA ligase (715 aa).

Residues 47–51 (DADYD), 96–97 (SL), and Glu129 contribute to the NAD(+) site. The N6-AMP-lysine intermediate role is filled by Lys131. Residues Arg152, Glu189, Lys306, and Lys330 each coordinate NAD(+). Zn(2+) contacts are provided by Cys435, Cys438, Cys453, and Cys459. The BRCT domain occupies 637-715 (KRDSAVAGKT…EDEWLALIQG (79 aa)).

The protein belongs to the NAD-dependent DNA ligase family. LigA subfamily. The cofactor is Mg(2+). Mn(2+) serves as cofactor.

The catalysed reaction is NAD(+) + (deoxyribonucleotide)n-3'-hydroxyl + 5'-phospho-(deoxyribonucleotide)m = (deoxyribonucleotide)n+m + AMP + beta-nicotinamide D-nucleotide.. Its function is as follows. DNA ligase that catalyzes the formation of phosphodiester linkages between 5'-phosphoryl and 3'-hydroxyl groups in double-stranded DNA using NAD as a coenzyme and as the energy source for the reaction. It is essential for DNA replication and repair of damaged DNA. This chain is DNA ligase, found in Rhodopseudomonas palustris (strain BisA53).